A 267-amino-acid chain; its full sequence is Zerumbone synthase (267 aa).

Residue 9–33 coordinates NAD(+); that stretch reads LVTGGASGIGESIARLFIEHGAKIC. S142 serves as a coordination point for substrate. Catalysis depends on Y155, which acts as the Proton acceptor.

It belongs to the short-chain dehydrogenases/reductases (SDR) family. In terms of tissue distribution, expressed in leaves, stems and rhizomes.

The catalysed reaction is 10-hydroxy-alpha-humulene + NAD(+) = zerumbone + NADH + H(+). Functionally, catalyzes 8-hydroxy-alpha-humulene into zerumbone in presence of NAD. Also converts borneol to camphor in vitro. Zerumbone is a highly promising multi-anticancer agent. In Zingiber zerumbet (Shampoo ginger), this protein is Zerumbone synthase (ZSD1).